A 715-amino-acid polypeptide reads, in one-letter code: Putative macrophage stimulating 1-like protein (715 aa).

Residues 1–20 form the signal peptide; sequence MAPAPVTLLAPGAASSMSCS. The PAN domain occupies 21 to 110; that stretch reads QPGQRSPSND…GRCDLFQEKG (90 aa). Kringle domains are found at residues 63–156, 160–238, 252–345, and 353–464; these read GRCG…IKSC, ACVW…LPRC, SCFR…IRRC, and DCYH…LRRC. Disulfide bonds link C127/C151, C161/C238, C182/C221, C210/C233, C253/C345, C316/C339, C354/C464, C375/C447, C511/C527, C606/C671, C636/C650, and C661/C689. The 226-residue stretch at 488 to 713 folds into the Peptidase S1 domain; sequence VAGGHPGNSP…FVDWIHKVMR (226 aa).

Belongs to the peptidase S1 family. Plasminogen subfamily.

The protein resides in the secreted. The protein is Putative macrophage stimulating 1-like protein (MST1L) of Homo sapiens (Human).